A 270-amino-acid chain; its full sequence is Homeobox protein pal-1 (270 aa).

3 disordered regions span residues 1–24 (MSVD…TTVP), 96–130 (VKPP…SGAA), and 175–201 (LGNN…TNNV). Composition is skewed to low complexity over residues 14–24 (SSSTPSPTTVP) and 101–130 (SNGS…SGAA). Residues 206–265 (ADKYRMVYSDYQRLELEKEFHTSPFITSDRKSQLSTMLSLTERQIKIWFQNRRAKDRRDK) constitute a DNA-binding region (homeobox).

It belongs to the Caudal homeobox family. In terms of assembly, interacts with tir-1 and let-756. Blastomeres. Embryo. Oocytes.

It localises to the nucleus. It is found in the chromosome. The protein localises to the centromere. Its subcellular location is the kinetochore. Functionally, transcriptional activator. Interacts with promoter regions for tbx-8.9, tbx-9, elt-1, hnd-1, scrt-1, and vab-7 genes. Binds the sequence ATTTATGAC. Binds to the enhancer region of the hlh-1 gene promoter during embryonic body wall muscle development. Activates the gene for mab-5 in embryo development. Necessary for vab-7 expression in C blastomeres in the posterior of embryos. Required for posterior V6 neuroectoblast cell fate specification during postembryonic neurogenesis (patterning) which generates the characteristic ray lineage during male tail development. Binds to ced-3 promoter and activated expression which is crucial for tail-spike cell death. Has a role in E cell specification in endoderm development and body wall muscle development. This is Homeobox protein pal-1 (pal-1) from Caenorhabditis elegans.